The chain runs to 507 residues: Maturase K (507 aa).

Belongs to the intron maturase 2 family. MatK subfamily.

Its subcellular location is the plastid. It localises to the chloroplast. Usually encoded in the trnK tRNA gene intron. Probably assists in splicing its own and other chloroplast group II introns. The polypeptide is Maturase K (Annona muricata (Soursop)).